Here is a 215-residue protein sequence, read N- to C-terminus: Mediator of RNA polymerase II transcription subunit 8 (215 aa).

Residues 27-89 adopt a coiled-coil conformation; sequence LDALRMKFSQ…YEETLDATVA (63 aa).

The protein belongs to the Mediator complex subunit 8 family. Component of the Mediator complex.

It is found in the nucleus. Component of the Mediator complex, a coactivator involved in the regulated transcription of nearly all RNA polymerase II-dependent genes. Mediator functions as a bridge to convey information from gene-specific regulatory proteins to the basal RNA polymerase II transcription machinery. Mediator is recruited to promoters by direct interactions with regulatory proteins and serves as a scaffold for the assembly of a functional preinitiation complex with RNA polymerase II and the general transcription factors. The polypeptide is Mediator of RNA polymerase II transcription subunit 8 (MED8) (Kluyveromyces lactis (strain ATCC 8585 / CBS 2359 / DSM 70799 / NBRC 1267 / NRRL Y-1140 / WM37) (Yeast)).